Reading from the N-terminus, the 154-residue chain is Putative pre-16S rRNA nuclease (154 aa).

Belongs to the YqgF nuclease family.

The protein localises to the cytoplasm. Functionally, could be a nuclease involved in processing of the 5'-end of pre-16S rRNA. The chain is Putative pre-16S rRNA nuclease from Rickettsia felis (strain ATCC VR-1525 / URRWXCal2) (Rickettsia azadi).